Consider the following 970-residue polypeptide: Villin-3 (970 aa).

6 Gelsolin-like repeats span residues 31 to 111 (AVPV…ERFL), 151 to 219 (TVHV…EDGK), 273 to 339 (VLTR…TVIF), 416 to 484 (KFYS…PAEF), 536 to 576 (AIQV…QELA), and 643 to 714 (NFTQ…PQFF). Residues 741-908 (DGVKPKLDKP…EGQPENEEGL (168 aa)) form a disordered region. Polar residues predominate over residues 755–778 (TTSSSHTGRSSVPEKSQRSRSMSF). Positions 833–842 (AASIAAISAS) are enriched in low complexity. Residues 878–893 (KDSTPSKDSPTVTPTI) are compositionally biased toward polar residues. The region spanning 905 to 970 (EEGLPVYPYE…NRLKIALQLF (66 aa)) is the HP domain.

It belongs to the villin/gelsolin family. As to expression, expressed in roots, young leaves, and inflorescences, mostly in the vasculature of roots, leaves, and filaments of the anthers and in epidermal cells of the elongation zone and root hairs. Also detected in guard cells.

It localises to the cytoplasm. The protein resides in the cytoskeleton. Ca(2+)-regulated actin-binding protein. Binds actin microfilaments (MFs). Involved in actin filament bundling, severing and capping. Caps the barbed end of actin filaments and is able to sever them in a calcium-dependent manner. MF severing is promoted by VLN1. The polypeptide is Villin-3 (Oryza sativa subsp. japonica (Rice)).